Consider the following 309-residue polypeptide: Ferrochelatase (309 aa).

Residues His185 and Glu262 each contribute to the Fe cation site.

The protein belongs to the ferrochelatase family.

The protein localises to the cytoplasm. The enzyme catalyses heme b + 2 H(+) = protoporphyrin IX + Fe(2+). Its pathway is porphyrin-containing compound metabolism; protoheme biosynthesis; protoheme from protoporphyrin-IX: step 1/1. Catalyzes the ferrous insertion into protoporphyrin IX. The sequence is that of Ferrochelatase from Campylobacter jejuni subsp. jejuni serotype O:6 (strain 81116 / NCTC 11828).